The following is a 164-amino-acid chain: 3-isopropylmalate dehydratase small subunit (164 aa).

Belongs to the LeuD family. LeuD type 2 subfamily. As to quaternary structure, heterodimer of LeuC and LeuD.

The catalysed reaction is (2R,3S)-3-isopropylmalate = (2S)-2-isopropylmalate. It participates in amino-acid biosynthesis; L-leucine biosynthesis; L-leucine from 3-methyl-2-oxobutanoate: step 2/4. Its function is as follows. Catalyzes the isomerization between 2-isopropylmalate and 3-isopropylmalate, via the formation of 2-isopropylmaleate. The polypeptide is 3-isopropylmalate dehydratase small subunit (Lachnospira eligens (strain ATCC 27750 / DSM 3376 / VPI C15-48 / C15-B4) (Eubacterium eligens)).